The primary structure comprises 459 residues: Cysteine--tRNA ligase (459 aa).

Cys27 provides a ligand contact to Zn(2+). The 'HIGH' region motif lies at 29–39; the sequence is VTVYDDCHIGH. The Zn(2+) site is built by Cys208, His233, and Glu237. The short motif at 265-269 is the 'KMSKS' region element; the sequence is KMSKS. Lys268 contacts ATP.

The protein belongs to the class-I aminoacyl-tRNA synthetase family. Monomer. Requires Zn(2+) as cofactor.

It localises to the cytoplasm. It carries out the reaction tRNA(Cys) + L-cysteine + ATP = L-cysteinyl-tRNA(Cys) + AMP + diphosphate. The sequence is that of Cysteine--tRNA ligase from Francisella tularensis subsp. novicida (strain U112).